We begin with the raw amino-acid sequence, 189 residues long: GTP cyclohydrolase 1 (189 aa).

Zn(2+) is bound by residues Cys78, His81, and Cys150.

It belongs to the GTP cyclohydrolase I family. In terms of assembly, homomer.

The enzyme catalyses GTP + H2O = 7,8-dihydroneopterin 3'-triphosphate + formate + H(+). Its pathway is cofactor biosynthesis; 7,8-dihydroneopterin triphosphate biosynthesis; 7,8-dihydroneopterin triphosphate from GTP: step 1/1. The chain is GTP cyclohydrolase 1 from Listeria monocytogenes serotype 4a (strain HCC23).